A 101-amino-acid polypeptide reads, in one-letter code: MTFQRSLRDGFHRLINFYFYPSYHDTVVHNLAFSTSDYIYFKHLTDRNDDALLKVDQTINKTNRFIFRKLKILCPSFLNYSFINIYCFGPYTMVGEEFLFF.

Residues 72–94 (ILCPSFLNYSFINIYCFGPYTMV) traverse the membrane as a helical segment.

It localises to the membrane. This is an uncharacterized protein from Schizosaccharomyces pombe (strain 972 / ATCC 24843) (Fission yeast).